Here is a 408-residue protein sequence, read N- to C-terminus: Intracellular coagulation inhibitor 2 (408 aa).

The N-terminal stretch at 1–22 is a signal peptide; it reads MLSRRTLDCCLVMLIVSTTFCQ. Cysteine 50 and cysteine 249 are disulfide-bonded. N-linked (GlcNAc...) asparagine glycosylation is present at asparagine 174.

Belongs to the serpin family. Monomer. Forms a covalent heterodimer with clotting factor C chain B. Forms a covalent heterodimer with proclotting enzyme heavy chain. Specifically expressed in hemocytes (at protein level).

Its subcellular location is the secreted. In terms of biological role, serine protease inhibitor that inhibits proclotting enzyme and to a lesser extent clotting factor C and clotting factor G. The polypeptide is Intracellular coagulation inhibitor 2 (Tachypleus tridentatus (Japanese horseshoe crab)).